Consider the following 141-residue polypeptide: Auxin-responsive protein SAUR62 (141 aa).

This sequence belongs to the ARG7 family. In terms of tissue distribution, expressed in stamen filaments and petals.

It localises to the cell membrane. May promote auxin-stimulated organ elongation, such as hypocotyls, stamen filaments and petals. This Arabidopsis thaliana (Mouse-ear cress) protein is Auxin-responsive protein SAUR62.